Consider the following 118-residue polypeptide: Large ribosomal subunit protein bL20 (118 aa).

Belongs to the bacterial ribosomal protein bL20 family.

Its function is as follows. Binds directly to 23S ribosomal RNA and is necessary for the in vitro assembly process of the 50S ribosomal subunit. It is not involved in the protein synthesizing functions of that subunit. The chain is Large ribosomal subunit protein bL20 from Photorhabdus laumondii subsp. laumondii (strain DSM 15139 / CIP 105565 / TT01) (Photorhabdus luminescens subsp. laumondii).